The primary structure comprises 133 residues: Transcriptional regulator MraZ (133 aa).

2 consecutive SpoVT-AbrB domains span residues 5 to 47 (TYEH…SKDD) and 76 to 119 (TVEI…SKNK).

Belongs to the MraZ family. In terms of assembly, forms oligomers.

It localises to the cytoplasm. The protein localises to the nucleoid. In Mycoplasma mycoides subsp. mycoides SC (strain CCUG 32753 / NCTC 10114 / PG1), this protein is Transcriptional regulator MraZ.